A 220-amino-acid polypeptide reads, in one-letter code: Ribosomal RNA small subunit methyltransferase G (220 aa).

S-adenosyl-L-methionine-binding positions include G82, L87, 137–138 (VE), and R152.

Belongs to the methyltransferase superfamily. RNA methyltransferase RsmG family.

It localises to the cytoplasm. It carries out the reaction guanosine(527) in 16S rRNA + S-adenosyl-L-methionine = N(7)-methylguanosine(527) in 16S rRNA + S-adenosyl-L-homocysteine. Functionally, specifically methylates the N7 position of guanine in position 527 of 16S rRNA. This Janthinobacterium sp. (strain Marseille) (Minibacterium massiliensis) protein is Ribosomal RNA small subunit methyltransferase G.